The sequence spans 89 residues: MSLNAETKAAIVAEYAQSEGDTGSPEVQVALLTASINHLQGHFKAHKGDHHSRRGLLRMVSRRRKLLDYLKGKDLARYQDLIKRLGLRR.

Belongs to the universal ribosomal protein uS15 family. In terms of assembly, part of the 30S ribosomal subunit. Forms a bridge to the 50S subunit in the 70S ribosome, contacting the 23S rRNA.

One of the primary rRNA binding proteins, it binds directly to 16S rRNA where it helps nucleate assembly of the platform of the 30S subunit by binding and bridging several RNA helices of the 16S rRNA. In terms of biological role, forms an intersubunit bridge (bridge B4) with the 23S rRNA of the 50S subunit in the ribosome. This is Small ribosomal subunit protein uS15 from Vibrio parahaemolyticus serotype O3:K6 (strain RIMD 2210633).